The following is an 814-amino-acid chain: Protein fam-161 (814 aa).

A compositionally biased stretch (polar residues) spans 71-87; the sequence is ITQHRSSYKVTKSSSCH. 4 disordered regions span residues 71 to 130, 150 to 255, 569 to 610, and 714 to 814; these read ITQH…SWSQ, RHQV…ATSA, SRSK…THAT, and MKSA…SSEA. The segment covering 99 to 111 has biased composition (basic and acidic residues); that stretch reads MPRHLDLKPRSSE. The segment covering 174–193 has biased composition (low complexity); that stretch reads STAPSQVSVTSSVQSVAALS. 2 stretches are compositionally biased toward polar residues: residues 194 to 207 and 216 to 235; these read GQNP…TPSH and RTHQ…TLQN. Basic residues predominate over residues 236-249; it reads PRHRTSSASRHHST. Composition is skewed to polar residues over residues 570–583 and 594–610; these read RSKS…NCQE and ENLP…THAT. The stretch at 606 to 689 forms a coiled coil; that stretch reads STHATQLREE…LAEMKQRVLN (84 aa). Over residues 714–727 the composition is skewed to basic and acidic residues; the sequence is MKSAKGRGIERVQS. Over residues 728 to 745 the composition is skewed to polar residues; sequence QEKQQSIGRRSSEVSGSG. Positions 751–765 are enriched in basic and acidic residues; that stretch reads KGYEESFESEDKSEK. Low complexity-rich tracts occupy residues 766 to 779 and 795 to 814; these read SGSS…SGSE and SKST…SSEA.

This sequence belongs to the FAM161 family. Expressed in amphid and phasmid ciliated neurons.

The protein resides in the cell projection. Its subcellular location is the cilium. It is found in the cytoplasm. It localises to the cytoskeleton. The protein localises to the cilium axoneme. The polypeptide is Protein fam-161 (Caenorhabditis elegans).